Consider the following 512-residue polypeptide: Plastidal glycolate/glycerate translocator 1, chloroplastic (512 aa).

The N-terminal 76 residues, 1–76 (MATLLATPIF…MNFERKLSVQ (76 aa)), are a transit peptide targeting the chloroplast. A77 is subject to N-acetylalanine. 12 helical membrane passes run 93 to 113 (VIAI…DYFL), 127 to 147 (ALFG…VVPA), 160 to 180 (FLFI…VLPL), 195 to 215 (YIVA…AIAV), 238 to 258 (LELW…LFYP), 270 to 290 (PFLL…PSSI), 293 to 313 (VFHP…AFGY), 336 to 356 (AGDI…FSMF), 367 to 387 (AEIF…TALV), 398 to 418 (TVSI…VSLF), 425 to 445 (LTAA…QVVL), and 480 to 500 (LPFC…LCSV).

It belongs to the CidB/LrgB family. In terms of tissue distribution, expressed in leaves, stems and flowers, but not in roots.

It localises to the plastid. The protein resides in the chloroplast membrane. Glycolate/glycerate transporter required for photorespiration. This Arabidopsis thaliana (Mouse-ear cress) protein is Plastidal glycolate/glycerate translocator 1, chloroplastic (PLGG1).